The following is a 210-amino-acid chain: MATRSKSSQRWLKEHFSDPFVKKAQAEGMRSRAAYKLEELLERDRLLKPHMVVVDLGAAPGGWSQQVRRQIGDTGRVLALDILDMPPLAGVEFLHGDFREEAVLSQFEAMLGDQPVDLVLSDMAPNKSGVGAVDQPRMMHLAELALDFADNHLKTGGAFLIKLFQGEGFDDYVRDMRRRYDKVSIRKPEASRKRSPEVYALGQGKRAHMK.

The S-adenosyl-L-methionine site is built by glycine 61, tryptophan 63, aspartate 81, aspartate 97, and aspartate 122. The active-site Proton acceptor is lysine 162. Over residues 187–196 the composition is skewed to basic and acidic residues; it reads KPEASRKRSP. Residues 187–210 are disordered; sequence KPEASRKRSPEVYALGQGKRAHMK.

The protein belongs to the class I-like SAM-binding methyltransferase superfamily. RNA methyltransferase RlmE family.

It is found in the cytoplasm. It catalyses the reaction uridine(2552) in 23S rRNA + S-adenosyl-L-methionine = 2'-O-methyluridine(2552) in 23S rRNA + S-adenosyl-L-homocysteine + H(+). Its function is as follows. Specifically methylates the uridine in position 2552 of 23S rRNA at the 2'-O position of the ribose in the fully assembled 50S ribosomal subunit. This chain is Ribosomal RNA large subunit methyltransferase E, found in Stenotrophomonas maltophilia (strain K279a).